The sequence spans 432 residues: Enolase (432 aa).

(2R)-2-phosphoglycerate is bound at residue glutamine 167. Glutamate 209 acts as the Proton donor in catalysis. Mg(2+)-binding residues include aspartate 246, glutamate 290, and aspartate 317. Lysine 342, arginine 371, serine 372, and lysine 393 together coordinate (2R)-2-phosphoglycerate. Lysine 342 (proton acceptor) is an active-site residue.

It belongs to the enolase family. Component of the RNA degradosome, a multiprotein complex involved in RNA processing and mRNA degradation. Mg(2+) is required as a cofactor.

It localises to the cytoplasm. The protein localises to the secreted. Its subcellular location is the cell surface. The catalysed reaction is (2R)-2-phosphoglycerate = phosphoenolpyruvate + H2O. It functions in the pathway carbohydrate degradation; glycolysis; pyruvate from D-glyceraldehyde 3-phosphate: step 4/5. Functionally, catalyzes the reversible conversion of 2-phosphoglycerate (2-PG) into phosphoenolpyruvate (PEP). It is essential for the degradation of carbohydrates via glycolysis. This Shigella sonnei (strain Ss046) protein is Enolase.